A 118-amino-acid chain; its full sequence is Large ribosomal subunit protein bL20 (118 aa).

Belongs to the bacterial ribosomal protein bL20 family.

Its function is as follows. Binds directly to 23S ribosomal RNA and is necessary for the in vitro assembly process of the 50S ribosomal subunit. It is not involved in the protein synthesizing functions of that subunit. The chain is Large ribosomal subunit protein bL20 from Azotobacter vinelandii.